A 1035-amino-acid chain; its full sequence is Potassium-transporting ATPase alpha chain 1 (1035 aa).

A disordered region spans residues 1-41 (MGKAENYELYSVELGPGPGGDMAAKMSKKKKAGGGGGKRKE). At 1–98 (MGKAENYELY…NALRPPRGTP (98 aa)) the chain is on the cytoplasmic side. A phosphotyrosine mark is found at Y7 and Y10. The segment covering 26–40 (MSKKKKAGGGGGKRK) has biased composition (basic residues). At S27 the chain carries Phosphoserine. Residues 99–119 (EYVKFARQLAGGLQCLMWVAA) traverse the membrane as a helical segment. The Lumenal portion of the chain corresponds to 120–142 (AICLIAFAIQASEGDLTTDDNLY). A helical transmembrane segment spans residues 143-163 (LAIALIAVVVVTGCFGYYQEF). At 164-299 (KSTNIIASFK…NEKTPIAIEI (136 aa)) the chain is on the cytoplasmic side. Residues 300 to 319 (EHFVDIIAGLAILFGATFFI) traverse the membrane as a helical segment. Over 320–331 (VAMCIGYTFLRA) the chain is Lumenal. Residues 332 to 349 (MVFFMAIVVAYVPEGLLA) form a helical membrane-spanning segment. Residues V340, A341, V343, and E345 each contribute to the K(+) site. Residues 350 to 783 (TVTVCLSLTA…EQGRLIFDNL (434 aa)) are Cytoplasmic-facing. D387 acts as the 4-aspartylphosphate intermediate in catalysis. Positions 387 and 389 each coordinate Mg(2+). Phosphoserine is present on residues S463 and S601. Residues D728 and D732 each coordinate Mg(2+). Residues 784-803 (KKSIAYTLTKNIPELTPYLI) traverse the membrane as a helical segment. Residue E797 coordinates K(+). Topologically, residues 804–813 (YITVSVPLPL) are lumenal. A helical transmembrane segment spans residues 814–834 (GCITILFIELCTDIFPSVSLA). K(+) is bound at residue E822. Topologically, residues 835 to 854 (YEKAESDIMHLRPRNPKRDR) are cytoplasmic. S840 carries the post-translational modification Phosphoserine. A helical membrane pass occupies residues 855-877 (LVNEPLAAYSYFQIGAIQSFAGF). At 878–929 (TDYFTAMAQEGWFPLLCVGLRAQWEDHHLQDLQDSYGQEWTFGQRLYQQYTC) the chain is on the lumenal side. Residues 930-949 (YTVFFISIEVCQIADVLIRK) traverse the membrane as a helical segment. The Cytoplasmic portion of the chain corresponds to 950–963 (TRRLSAFQQGFFRN). Position 954 is a phosphoserine; by PKA (S954). Residues 964–982 (KILVIAIVFQVCIGCFLCY) form a helical membrane-spanning segment. Topologically, residues 983–997 (CPGMPNIFNFMPIRF) are lumenal. A helical transmembrane segment spans residues 998–1018 (QWWLVPLPYGILIFVYDEIRK). Over 1019–1035 (LGVRCCPGSWWDQELYY) the chain is Cytoplasmic.

This sequence belongs to the cation transport ATPase (P-type) (TC 3.A.3) family. Type IIC subfamily. As to quaternary structure, the gastric H(+)/K(+) ATPase pump is composed of the catalytic alpha subunit ATP4A and the regulatory beta subunit ATP4B. Interacts (via the P-domain) with ATP4B (via N-terminus); this interaction stabilizes the lumenal-open E2 conformation state and prevents the reverse reaction of the transport cycle. As to expression, expressed in gastric parietal cells (at protein level).

The protein resides in the apical cell membrane. It catalyses the reaction K(+)(out) + ATP + H2O + H(+)(in) = K(+)(in) + ADP + phosphate + 2 H(+)(out). Its function is as follows. The catalytic subunit of the gastric H(+)/K(+) ATPase pump which transports H(+) ions in exchange for K(+) ions across the apical membrane of parietal cells. Uses ATP as an energy source to pump H(+) ions to the gastric lumen while transporting K(+) ion from the lumen into the cell. Remarkably generates a million-fold proton gradient across the gastric parietal cell membrane, acidifying the gastric juice down to pH 1. Within a transport cycle, the transfer of a H(+) ion across the membrane is coupled to ATP hydrolysis and is associated with a transient phosphorylation that shifts the pump conformation from inward-facing (E1) to outward-facing state (E2). The release of the H(+) ion in the stomach lumen is followed by binding of K(+) ion converting the pump conformation back to the E1 state. This Homo sapiens (Human) protein is Potassium-transporting ATPase alpha chain 1.